The primary structure comprises 350 residues: 2-oxoisovalerate dehydrogenase subunit beta (350 aa).

As to quaternary structure, heterodimer of an alpha and a beta chain. Thiamine diphosphate is required as a cofactor.

The catalysed reaction is N(6)-[(R)-lipoyl]-L-lysyl-[protein] + 3-methyl-2-oxobutanoate + H(+) = N(6)-[(R)-S(8)-2-methylpropanoyldihydrolipoyl]-L-lysyl-[protein] + CO2. The branched-chain alpha-keto dehydrogenase complex catalyzes the overall conversion of alpha-keto acids to acyl-CoA and CO(2). It contains multiple copies of three enzymatic components: branched-chain alpha-keto acid decarboxylase (E1), lipoamide acyltransferase (E2) and lipoamide dehydrogenase (E3). In Pseudomonas aeruginosa (strain ATCC 15692 / DSM 22644 / CIP 104116 / JCM 14847 / LMG 12228 / 1C / PRS 101 / PAO1), this protein is 2-oxoisovalerate dehydrogenase subunit beta (bkdA2).